Reading from the N-terminus, the 1946-residue chain is Integrin beta-like protein E (1946 aa).

The first 22 residues, 1 to 22 (MNNLFKFLFVLLAIFCPPISDL), serve as a signal peptide directing secretion. The Extracellular segment spans residues 23-1875 (VVSHGVPQQH…ATTQTTNNKT (1853 aa)). Asn107, Asn134, and Asn203 each carry an N-linked (GlcNAc...) asparagine glycan. The EGF-like domain occupies 423–460 (YGQNCDPTPPCDKGIPNEGILGDGKCMCINGYSGDKCD). 2 disulfide bridges follow: Cys433–Cys448 and Cys450–Cys459. One can recognise a VWFA domain in the interval 514–699 (DVFVLVDVNV…AGLKSVLSNV (186 aa)). N-linked (GlcNAc...) asparagine glycans are attached at residues Asn705, Asn860, Asn1043, Asn1113, Asn1177, Asn1374, Asn1401, Asn1513, Asn1611, Asn1620, Asn1662, Asn1671, Asn1737, Asn1743, Asn1762, Asn1812, Asn1852, and Asn1873. Residues 1876 to 1896 (VLTGAIAGAAAGTALIAAAAW) traverse the membrane as a helical segment. Over 1897 to 1946 (KLLRKAAPPTDTFFSEAAFLGDGVNANPLYEQSASAAENPLYQSASDNTD) the chain is Cytoplasmic.

It belongs to the SIB family. As to quaternary structure, interacts with talA/talin.

It localises to the membrane. Functionally, implicated in cellular adhesion. This chain is Integrin beta-like protein E (sibE), found in Dictyostelium discoideum (Social amoeba).